Reading from the N-terminus, the 2214-residue chain is Multifunctional protein URA2 (2214 aa).

A2 is modified (N-acetylalanine). The tract at residues 2 to 400 (ATIAPTAPIT…PGPRDTEFLF (399 aa)) is GATase (Glutamine amidotransferase). 3 residues coordinate L-glutamine: S64, G273, and G275. Residues 228 to 413 (RILAIDVGMK…IQAVKEFKYT (186 aa)) form the Glutamine amidotransferase type-1 domain. C302 acts as the Nucleophile; for GATase activity in catalysis. L-glutamine is bound by residues L303, Q306, N344, G346, and F347. Residues H386 and E388 each act as for GATase activity in the active site. Residues 401–440 (DVFIQAVKEFKYTQVLKPIAFPGGLLEDNVKAHPRIEAKK) form a linker region. The CPSase A stretch occupies residues 440–980 (KVLVLGSGGL…DSHDLSFDDH (541 aa)). The segment at 440 to 1482 (KVLVLGSGGL…TNVKCAKLLI (1043 aa)) is CPSase (Carbamoyl phosphate synthase). ATP is bound by residues R558, R598, G604, G605, K635, M637, E642, G668, I669, H670, Q711, and E725. 2 ATP-grasp domains span residues 562-754 (SNAI…KLGL) and 1099-1290 (SRML…KAIM). 3 residues coordinate Mg(2+): Q711, E725, and N727. Residues Q711, E725, and N727 each coordinate Mn(2+). A CPSase B region spans residues 981–1482 (GVMVLGSGVY…TNVKCAKLLI (502 aa)). 10 residues coordinate ATP: R1135, K1174, I1176, E1181, G1206, V1207, H1208, S1209, Q1249, and E1261. 3 residues coordinate Mg(2+): Q1249, E1261, and N1263. Mn(2+)-binding residues include Q1249, E1261, and N1263. Residues 1356-1508 (FKLPKKNILL…QTSHRTITLP (153 aa)) form the MGS-like domain. The tract at residues 1483–1492 (EAISRNITLD) is linker. Residues 1493-1821 (VSERDAQTSH…YNGETLVLSG (329 aa)) form a defective DHOase domain region. The segment at 1822 to 1909 (ELVSPGAKGK…NLIRSNNPFR (88 aa)) is linker. K1853 is covalently cross-linked (Glycyl lysine isopeptide (Lys-Gly) (interchain with G-Cter in ubiquitin)). S1857 is subject to Phosphoserine; by PKA. The interval 1910 to 2214 (GRHILSIKQF…LLAMVMGVDM (305 aa)) is ATCase (Aspartate transcarbamylase). R1962 and T1963 together coordinate carbamoyl phosphate. K1990 is a binding site for L-aspartate. Carbamoyl phosphate is bound by residues R2011, H2039, and Q2042. L-aspartate contacts are provided by R2072 and R2134. The carbamoyl phosphate site is built by L2173 and P2174.

It in the N-terminal section; belongs to the CarA family. The protein in the 2nd section; belongs to the CarB family. In the 3rd section; belongs to the metallo-dependent hydrolases superfamily. DHOase family. CAD subfamily. This sequence in the C-terminal section; belongs to the aspartate/ornithine carbamoyltransferase superfamily. ATCase family. The cofactor is Mg(2+). Requires Mn(2+) as cofactor.

The protein resides in the cytoplasm. The catalysed reaction is hydrogencarbonate + L-glutamine + 2 ATP + H2O = carbamoyl phosphate + L-glutamate + 2 ADP + phosphate + 2 H(+). It catalyses the reaction L-glutamine + H2O = L-glutamate + NH4(+). The enzyme catalyses hydrogencarbonate + NH4(+) + 2 ATP = carbamoyl phosphate + 2 ADP + phosphate + 2 H(+). It carries out the reaction carbamoyl phosphate + L-aspartate = N-carbamoyl-L-aspartate + phosphate + H(+). The protein operates within pyrimidine metabolism; UMP biosynthesis via de novo pathway; (S)-dihydroorotate from bicarbonate: step 1/3. It functions in the pathway pyrimidine metabolism; UMP biosynthesis via de novo pathway; (S)-dihydroorotate from bicarbonate: step 2/3. Both CPSase and ATCase activities are feedback inhibited by the end product UTP. In terms of biological role, multifunctional protein that encodes the first 2 enzymatic activities of the de novo pyrimidine pathway: carbamoylphosphate synthetase (CPSase; EC 6.3.5.5) and aspartate transcarbamylase (ATCase; EC 2.1.3.2). The CPSase-function is accomplished in 2 steps, by a glutamine-dependent amidotransferase activity (GATase) that binds and cleaves glutamine to produce ammonia, followed by an ammonium-dependent carbamoyl phosphate synthetase, which reacts with the ammonia, hydrogencarbonate and ATP to form carbamoyl phosphate. The endogenously produced carbamoyl phosphate is sequestered and channeled to the ATCase active site. ATCase then catalyzes the formation of carbamoyl-L-aspartate from L-aspartate and carbamoyl phosphate. This Saccharomyces cerevisiae (strain ATCC 204508 / S288c) (Baker's yeast) protein is Multifunctional protein URA2 (URA2).